Consider the following 329-residue polypeptide: GTPase Obg (329 aa).

Residues 1–159 (MQFIDQAIID…WSLQLELKLL (159 aa)) form the Obg domain. One can recognise an OBG-type G domain in the interval 160–328 (AEVGIIGLPN…LLSSIWNELG (169 aa)). Residues 166–173 (GLPNAGKS), 191–195 (FTTLI), 213–216 (DIPG), 280–283 (NKKE), and 309–311 (SAV) each bind ATP. Residues S173 and T193 each coordinate Mg(2+).

The protein belongs to the TRAFAC class OBG-HflX-like GTPase superfamily. OBG GTPase family. In terms of assembly, monomer. Requires Mg(2+) as cofactor.

It is found in the cytoplasm. An essential GTPase which binds GTP, GDP and possibly (p)ppGpp with moderate affinity, with high nucleotide exchange rates and a fairly low GTP hydrolysis rate. Plays a role in control of the cell cycle, stress response, ribosome biogenesis and in those bacteria that undergo differentiation, in morphogenesis control. The protein is GTPase Obg of Prochlorococcus marinus (strain NATL2A).